The chain runs to 281 residues: Protein EMBRYO DEFECTIVE 1674 (281 aa).

2 stretches are compositionally biased toward polar residues: residues M1–S14 and P24–S41. Residues M1–T47 are disordered. One can recognise an SANTA domain in the interval V66–Y153.

Its function is as follows. Required for normal embryo development. This is Protein EMBRYO DEFECTIVE 1674 from Arabidopsis thaliana (Mouse-ear cress).